The sequence spans 388 residues: Succinate--CoA ligase [ADP-forming] subunit beta (388 aa).

Positions 9–245 (KALLKEYGMP…KSQENERELK (237 aa)) constitute an ATP-grasp domain. Residues lysine 46, 53–55 (GRG), glutamate 100, tyrosine 103, and glutamate 108 each bind ATP. 2 residues coordinate Mg(2+): asparagine 200 and aspartate 214. Substrate is bound by residues asparagine 265 and 322–324 (GIV).

It belongs to the succinate/malate CoA ligase beta subunit family. In terms of assembly, heterotetramer of two alpha and two beta subunits. The cofactor is Mg(2+).

The catalysed reaction is succinate + ATP + CoA = succinyl-CoA + ADP + phosphate. It catalyses the reaction GTP + succinate + CoA = succinyl-CoA + GDP + phosphate. Its pathway is carbohydrate metabolism; tricarboxylic acid cycle; succinate from succinyl-CoA (ligase route): step 1/1. Functionally, succinyl-CoA synthetase functions in the citric acid cycle (TCA), coupling the hydrolysis of succinyl-CoA to the synthesis of either ATP or GTP and thus represents the only step of substrate-level phosphorylation in the TCA. The beta subunit provides nucleotide specificity of the enzyme and binds the substrate succinate, while the binding sites for coenzyme A and phosphate are found in the alpha subunit. In Acinetobacter baumannii (strain SDF), this protein is Succinate--CoA ligase [ADP-forming] subunit beta.